A 274-amino-acid chain; its full sequence is Nitrogenase iron protein (274 aa).

8–15 lines the ATP pocket; the sequence is GKGGIGKS. Cys94 is a binding site for [4Fe-4S] cluster. The residue at position 97 (Arg97) is an ADP-ribosylarginine; by dinitrogenase reductase ADP-ribosyltransferase. Position 131 (Cys131) interacts with [4Fe-4S] cluster.

Belongs to the NifH/BchL/ChlL family. As to quaternary structure, homodimer. Requires [4Fe-4S] cluster as cofactor. In terms of processing, the reversible ADP-ribosylation of Arg-97 inactivates the nitrogenase reductase and regulates nitrogenase activity.

It carries out the reaction N2 + 8 reduced [2Fe-2S]-[ferredoxin] + 16 ATP + 16 H2O = H2 + 8 oxidized [2Fe-2S]-[ferredoxin] + 2 NH4(+) + 16 ADP + 16 phosphate + 6 H(+). The key enzymatic reactions in nitrogen fixation are catalyzed by the nitrogenase complex, which has 2 components: the iron protein and the molybdenum-iron protein. The chain is Nitrogenase iron protein from Dehalococcoides mccartyi (strain ATCC BAA-2266 / KCTC 15142 / 195) (Dehalococcoides ethenogenes (strain 195)).